The following is a 108-amino-acid chain: DNA-directed RNA polymerase III subunit RPC10 (108 aa).

Zn(2+) contacts are provided by cysteine 5, cysteine 8, cysteine 25, cysteine 28, cysteine 69, and cysteine 72. The C4-type zinc finger occupies 5–28 (CPGCGNGLIVEEGQRCHRFACNTC). The TFIIS-type zinc-finger motif lies at 65–107 (TAEPCPKCEHPRAYFMQLQTRYADEPMTTFYKCCNAQCGHRWR). A Hairpin motif is present at residues 88-89 (DE). Positions 98 and 102 each coordinate Zn(2+).

Belongs to the archaeal RpoM/eukaryotic RPA12/RPB9/RPC11 RNA polymerase family. In terms of assembly, component of the RNA polymerase III complex consisting of 17 subunits: a ten-subunit horseshoe-shaped catalytic core composed of POLR3A/RPC1, POLR3B/RPC2, POLR1C/RPAC1, POLR1D/RPAC2, POLR3K/RPC10, POLR2E/RPABC1, POLR2F/RPABC2, POLR2H/RPABC3, POLR2K/RPABC4 and POLR2L/RPABC5; a mobile stalk composed of two subunits POLR3H/RPC8 and CRCP/RPC9, protruding from the core and functioning primarily in transcription initiation; and additional subunits homologous to general transcription factors of the RNA polymerase II machinery, POLR3C/RPC3-POLR3F/RPC6-POLR3G/RPC7 heterotrimer required for transcription initiation and POLR3D/RPC4-POLR3E/RPC5 heterodimer involved in both transcription initiation and termination.

The protein localises to the nucleus. Functionally, core component of RNA polymerase III (Pol III) which synthesizes small non-coding RNAs using the four ribonucleoside triphosphates as substrates. Can mediate Pol I proofreading of the nascent RNA transcript. Anchors into the Pol III active site to constantly monitor transcription fidelity, cleaves mis-incorporated 5'-ribonucleotides and restarts the transcription process. Once Pol III reaches the poly(dT) termination signal, can induce Pol III clamp opening and transcription termination. Pol III plays an important role in sensing and limiting infection by intracellular bacteria and DNA viruses. Acts as a nuclear and cytosolic DNA sensor involved in innate immune response. Can sense non-self dsDNA that serves as template for transcription into dsRNA. The non-self RNA polymerase III transcripts, such as Epstein-Barr virus-encoded RNAs (EBERs) induce type I interferon and NF-kappa-B through the RIG-I pathway. This chain is DNA-directed RNA polymerase III subunit RPC10 (POLR3K), found in Bos taurus (Bovine).